A 433-amino-acid polypeptide reads, in one-letter code: Acetyl-CoA-benzylalcohol acetyltransferase (433 aa).

Catalysis depends on proton acceptor residues histidine 152 and aspartate 377.

The protein belongs to the plant acyltransferase family.

The catalysed reaction is benzyl alcohol + acetyl-CoA = benzyl acetate + CoA. It catalyses the reaction (E)-cinnamyl alcohol + acetyl-CoA = (E)-cinnamyl acetate + CoA. Its function is as follows. Involved in the biosynthesis of benzyl acetate, a major constituent of the floral scent. Can use benzylalcohol, cinnamylalcohol, 3-cis-hexene-1-ol or heptanol as substrates. Has some activity with 2-phenylethanol and 2-naphtalene-ethanol. The protein is Acetyl-CoA-benzylalcohol acetyltransferase (BEAT) of Clarkia breweri (Fairy fans).